The chain runs to 509 residues: Lysine--tRNA ligase (509 aa).

The Mg(2+) site is built by glutamate 418 and glutamate 425.

The protein belongs to the class-II aminoacyl-tRNA synthetase family. In terms of assembly, homodimer. Requires Mg(2+) as cofactor.

It localises to the cytoplasm. It carries out the reaction tRNA(Lys) + L-lysine + ATP = L-lysyl-tRNA(Lys) + AMP + diphosphate. The polypeptide is Lysine--tRNA ligase (lysS) (Acinetobacter baylyi (strain ATCC 33305 / BD413 / ADP1)).